The sequence spans 404 residues: Phosphoribulokinase, chloroplastic (404 aa).

The transit peptide at 1 to 53 (MAFCSPHTTTSLRSPCTTIPNSGFRQNQVIFFTTRSSRRSNTRHGARTFQVSC) directs the protein to the chloroplast. Cys-69 and Cys-108 are disulfide-bonded.

Belongs to the phosphoribulokinase family.

The protein localises to the plastid. The protein resides in the chloroplast. The catalysed reaction is D-ribulose 5-phosphate + ATP = D-ribulose 1,5-bisphosphate + ADP + H(+). It functions in the pathway carbohydrate biosynthesis; Calvin cycle. Light regulated via thioredoxin by reversible oxidation/reduction of sulfhydryl/disulfide groups. This chain is Phosphoribulokinase, chloroplastic, found in Triticum aestivum (Wheat).